The primary structure comprises 88 residues: Small ribosomal subunit protein bS16c (88 aa).

It belongs to the bacterial ribosomal protein bS16 family.

The protein localises to the plastid. It localises to the chloroplast. The polypeptide is Small ribosomal subunit protein bS16c (Citrus sinensis (Sweet orange)).